Reading from the N-terminus, the 273-residue chain is Ribosomal RNA small subunit methyltransferase A (273 aa).

Residues N18, L20, G45, E66, D91, and N113 each contribute to the S-adenosyl-L-methionine site.

It belongs to the class I-like SAM-binding methyltransferase superfamily. rRNA adenine N(6)-methyltransferase family. RsmA subfamily.

The protein resides in the cytoplasm. The catalysed reaction is adenosine(1518)/adenosine(1519) in 16S rRNA + 4 S-adenosyl-L-methionine = N(6)-dimethyladenosine(1518)/N(6)-dimethyladenosine(1519) in 16S rRNA + 4 S-adenosyl-L-homocysteine + 4 H(+). Functionally, specifically dimethylates two adjacent adenosines (A1518 and A1519) in the loop of a conserved hairpin near the 3'-end of 16S rRNA in the 30S particle. May play a critical role in biogenesis of 30S subunits. The protein is Ribosomal RNA small subunit methyltransferase A of Shigella boydii serotype 18 (strain CDC 3083-94 / BS512).